A 781-amino-acid chain; its full sequence is Putative UPF0313 protein YPO0674/y3502/YP_2990 (781 aa).

A Radical SAM core domain is found at 368–646 (AYDMIRFSIN…KALLRYHDPA (279 aa)). [4Fe-4S] cluster-binding residues include Cys382, Cys386, and Cys389. The disordered stretch occupies residues 681–781 (REARRALRHH…AGSRGKNRQH (101 aa)). The span at 696–708 (KHTSITRQRQPSN) shows a compositional bias: polar residues. Positions 726–750 (TSSAHSTSANQSTSANQSTSAAHST) are enriched in low complexity.

It belongs to the UPF0313 family. It depends on [4Fe-4S] cluster as a cofactor.

In Yersinia pestis, this protein is Putative UPF0313 protein YPO0674/y3502/YP_2990.